Reading from the N-terminus, the 301-residue chain is Light-independent protochlorophyllide reductase iron-sulfur ATP-binding protein (301 aa).

The tract at residues 1-26 is disordered; the sequence is MSNGSVPVSGIGGRGDGEGSSQVHME. ATP contacts are provided by residues 44–49 and lysine 73; that span reads GIGKST. Residue serine 48 participates in Mg(2+) binding. The [4Fe-4S] cluster site is built by cysteine 129 and cysteine 163. ATP is bound at residue 214 to 215; that stretch reads NR.

The protein belongs to the NifH/BchL/ChlL family. In terms of assembly, homodimer. Protochlorophyllide reductase is composed of three subunits; BchL, BchN and BchB. Requires [4Fe-4S] cluster as cofactor.

The enzyme catalyses chlorophyllide a + oxidized 2[4Fe-4S]-[ferredoxin] + 2 ADP + 2 phosphate = protochlorophyllide a + reduced 2[4Fe-4S]-[ferredoxin] + 2 ATP + 2 H2O. The protein operates within porphyrin-containing compound metabolism; bacteriochlorophyll biosynthesis (light-independent). Component of the dark-operative protochlorophyllide reductase (DPOR) that uses Mg-ATP and reduced ferredoxin to reduce ring D of protochlorophyllide (Pchlide) to form chlorophyllide a (Chlide). This reaction is light-independent. The L component serves as a unique electron donor to the NB-component of the complex, and binds Mg-ATP. In Halorhodospira halophila (strain DSM 244 / SL1) (Ectothiorhodospira halophila (strain DSM 244 / SL1)), this protein is Light-independent protochlorophyllide reductase iron-sulfur ATP-binding protein.